A 169-amino-acid polypeptide reads, in one-letter code: uncharacterized protein (169 aa).

A helical transmembrane segment spans residues Ser55–Phe77.

The protein localises to the membrane. This is an uncharacterized protein from Saccharomyces cerevisiae (strain ATCC 204508 / S288c) (Baker's yeast).